The primary structure comprises 133 residues: Ribonuclease P protein component (133 aa).

The protein belongs to the RnpA family. As to quaternary structure, consists of a catalytic RNA component (M1 or rnpB) and a protein subunit.

It catalyses the reaction Endonucleolytic cleavage of RNA, removing 5'-extranucleotides from tRNA precursor.. Its function is as follows. RNaseP catalyzes the removal of the 5'-leader sequence from pre-tRNA to produce the mature 5'-terminus. It can also cleave other RNA substrates such as 4.5S RNA. The protein component plays an auxiliary but essential role in vivo by binding to the 5'-leader sequence and broadening the substrate specificity of the ribozyme. The polypeptide is Ribonuclease P protein component (Pseudomonas savastanoi pv. phaseolicola (strain 1448A / Race 6) (Pseudomonas syringae pv. phaseolicola (strain 1448A / Race 6))).